We begin with the raw amino-acid sequence, 442 residues long: MASKAKTGRDDEATSAVELTEATESAVARTDGDSTTDTASKLGHHSFLSRLYTGTGAFEVVGRRRLWFGVSGAIVAVAIASIVFRGFTFGIDFKGGTTVSFPRGSTQVAQVEDVYYRALGSEPQSVVIVGAGASATVQIRSETLTSDQTAKLRDALFEAFGPKGTDGQPSKQAISDSAVSETWGGQITKKAVIALVVFLVLVALYITVRYERYMTISAITAMLFDLTVTAGVYSLVGFEVTPATVIGLLTILGFSLYDTVIVFDKVEENTHGFQHTTRRTFAEQANLAINQTFMRSINTSLIGVLPVLALMLVAVWLLGVGTLKDLALVQLIGIIIGTYSSIFFATPLLVTLRERTELVRNHTRRVLKRRNSGSPAGSEDASTDGGEQPAAADEQSLVGITQASSQSAPRAAQGSSKPAPGARPVRPVGTRRPTGKRNAGRR.

Positions 1 to 39 (MASKAKTGRDDEATSAVELTEATESAVARTDGDSTTDTA) are disordered. 6 helical membrane passes run 67–87 (WFGV…FRGF), 187–207 (ITKK…LYIT), 218–238 (AITA…LVGF), 243–263 (ATVI…VIVF), 301–321 (LIGV…LGVG), and 331–351 (LIGI…LLVT). A disordered region spans residues 366-442 (VLKRRNSGSP…PTGKRNAGRR (77 aa)). The span at 402 to 432 (QASSQSAPRAAQGSSKPAPGARPVRPVGTRR) shows a compositional bias: low complexity. Basic residues predominate over residues 433–442 (PTGKRNAGRR).

Belongs to the SecD/SecF family. SecF subfamily. In terms of assembly, forms a complex with SecD. Part of the essential Sec protein translocation apparatus which comprises SecA, SecYEG and auxiliary proteins SecDF. Other proteins may also be involved.

It localises to the cell membrane. Its function is as follows. Part of the Sec protein translocase complex. Interacts with the SecYEG preprotein conducting channel. SecDF uses the proton motive force (PMF) to complete protein translocation after the ATP-dependent function of SecA. This Mycobacterium tuberculosis (strain CDC 1551 / Oshkosh) protein is Protein translocase subunit SecF.